We begin with the raw amino-acid sequence, 345 residues long: Krueppel-like factor 3 (345 aa).

Residues 1 to 74 are repressor domain; the sequence is MLMFDPVPVK…TVNKRSSPPS (74 aa). A Glycyl lysine isopeptide (Lys-Gly) (interchain with G-Cter in SUMO) cross-link involves residue Lys10. Positions 60-68 match the 9aaTAD; inactive motif; it reads EPVDLTVNK. The CTBP-binding motif signature appears at 61 to 65; the sequence is PVDLT. Residues 66 to 112 form a disordered region; the sequence is VNKRSSPPSAGNSPSSLKFPSSHRRASPGLSMPSSSPPIKKYSPPSP. Residue Lys68 forms a Glycyl lysine isopeptide (Lys-Gly) (interchain with G-Cter in SUMO2) linkage. 2 stretches are compositionally biased toward low complexity: residues 70-81 and 92-108; these read SSPPSAGNSPSS and SPGL…KKYS. Phosphoserine is present on residues Ser71, Ser92, Ser101, Ser108, and Ser111. Glycyl lysine isopeptide (Lys-Gly) (interchain with G-Cter in SUMO2) cross-links involve residues Lys196 and Lys198. Residues Ser216, Ser224, and Ser250 each carry the phosphoserine modification. C2H2-type zinc fingers lie at residues 260–284, 290–314, and 320–342; these read HRCD…RRTH, YKCT…FRKH, and FQCP…RKRH.

This sequence belongs to the krueppel C2H2-type zinc-finger protein family. Monomer. In terms of processing, sumoylated with SUMO1. Sumoylation is enhanced by PIAS1, PIAS2alpha and PIAS2beta, and PIAS4, but not by Pc2. Enhances transcriptional repression, but has no effect on DNA binding. Sumoylation on Lys-198 is the major site.

The protein resides in the nucleus. Binds to the CACCC box of erythroid cell-expressed genes. May play a role in hematopoiesis. The chain is Krueppel-like factor 3 (KLF3) from Homo sapiens (Human).